A 209-amino-acid chain; its full sequence is uncharacterized protein (209 aa).

The protein localises to the plastid. The protein resides in the chloroplast. This is an uncharacterized protein from Porphyra purpurea (Red seaweed).